A 282-amino-acid chain; its full sequence is Nucleotide-binding protein XCV3122 (282 aa).

Residue 5-12 (GLSGSGKS) coordinates ATP. A GTP-binding site is contributed by 57–60 (DVRS).

The protein belongs to the RapZ-like family.

In terms of biological role, displays ATPase and GTPase activities. The chain is Nucleotide-binding protein XCV3122 from Xanthomonas euvesicatoria pv. vesicatoria (strain 85-10) (Xanthomonas campestris pv. vesicatoria).